A 547-amino-acid chain; its full sequence is uncharacterized protein (547 aa).

The next 12 helical transmembrane spans lie at 33–53, 107–127, 145–165, 203–223, 231–251, 263–283, 298–318, 351–371, 397–417, 432–452, 470–490, and 499–519; these read PTFF…IMVI, PLIV…GVIF, TGLI…LSFA, VYIL…FYLA, FIAI…FLLV, VAGI…LIYL, LNKI…ASFF, TLLT…FGLL, TVII…VAFG, LDLA…VATG, IVSL…FQAI, and VFIW…IAFG.

The protein localises to the cell membrane. This is an uncharacterized protein from Mycoplasma genitalium (strain ATCC 33530 / DSM 19775 / NCTC 10195 / G37) (Mycoplasmoides genitalium).